The following is a 1578-amino-acid chain: MSLEQQDETVVEEETKTSFETNNSTANNTNNNTDNTYKEEILKSTESITRNDDKVDPTSATALEKDIINNGEYSGSSSSSGNNNINGSNNIKNIVIEKVEQLERVVVNNNNGDENNKDIHDSSNNTEDIDISKSHIIKYDKDEMSTISTIHYSDDESSKEKQDNINSNNNNNKNKNEQIINSENILDTPMTEASDQTTPSDTPPTLTNNTSSTTTTTTTNNTTTAATTTTNSRRKRNSLSTPSSEMDPVLDSTSENNTTRKTRGSRNSKKEPEELLLTPEQAKELSNKSKKWIYVPIIEAEAKKEEVLPAKRDRKQVFNENIFSSSRKSTTKGGEKKNDTASTTNTPIITAQQNTTPLSPTQTTTTTTTPTTTTAQQNTPAQTESKPPTTISINIKGSKSPKTTGGKQQKPTPPSPVVISQPVVPSTPVVATTKKTNSRSKRSTANNNSETTQTPEVVISAPTTTTAAITTPINITPSSDSATIQQLQQSISMLEDKIRLISSNNKVATEILNNTITTTTTTAATSAIKDEEIIENTELQTTFTKSSTLAPPSSERKYSNLYSDDEDDTEMVDVSVSIPIPIPIPTPTQTTTKKTTLSKKRKSNTSTIIPTTTIQQEQGQEQGQQQPPQQQQPPQQQQPPQQQQPPQQQPPQQSTSPSKTQQENTSSTTTTTTTTTTTTNTEDTTTVIDKKPKKKPRHSAPLIPQIKPRLPLNGGSSERAQRSSRGRMGKAMRDVVLTPVFKRCLDLLEELFEHQHSPPFLVAVDPYALGILDYFDVIKHPMDLGTIKASLIGGGYDTIDKFAEDCRLVFSNAKTYNPSTNPVHIMAQSLEDVFEKGFPKVLIEPPSPPPKNVDQEKIEKLSNDLKNVTKELEKFKKDDSNSINNNNNNNNNYNNNNNNNNNNSSSSSSRSSSRKSHSSGSSSSHRSGSSRSSRGSSSSSSSSSSSSSSSSSSSSSSSSNNKKYPKVTTEEKTKLGAEITQLPVDLLPSILQIIHNTNSLPEQKPGSEVVIDLMKFDDDILRRLSKFVEQYKNGEIPQHALPLSAPSSTHSSHSSSHDSSSNIREIEKLQKQLDRLGKGQQNSSSSSSSSSHSKRISKPISKARGRKVISTSSSNLNNSSNNINNNNNNINNYNNNNNYNNNNNNNLNNNNNNNINSNLNNNLNNNNNKDDIVIDGFKKENFSSIPEKDVETDISESSDSESDSESGSSDSSSSYSDSDFSDSDNDRRRNYNNSYNNNNNNNNNNNSSNNFNNQNNSYNNSNNNNNNNSSNNNNNNNNNNSNNNNSNNNNNNVNNNNNNHNNNNHNNNINNNNNNINNNTTQPSPSQQSTSLTNEPIKPPTILQTVKKPALPVTGSVASWSFDPTNNKESSSSSSTSSTSSTSNTTLTPIIQQSSLTHASSPISSSTFVSFSSSSSTPPTNNLSPPSPGLPNSPSINSPSSPSANNNNTDSAWNHFKAKNITLKQKEKERVLQEEVLRKEREEKEEELKKEEEKKRIEMEEIKRLAKEKEEREAEETRKQIESERAAAREAREKEKLNNSKGNMSFQYQMDVMASFEDNIDSSGSLLNLQLKPIEDPL.

Over residues 1 to 12 (MSLEQQDETVVE) the composition is skewed to acidic residues. 4 disordered regions span residues 1–39 (MSLE…TYKE), 108–127 (NNNN…NNTE), 151–285 (HYSD…AKEL), and 319–454 (NENI…TTQT). The segment covering 18 to 35 (SFETNNSTANNTNNNTDN) has biased composition (low complexity). The span at 152-163 (YSDDESSKEKQD) shows a compositional bias: basic and acidic residues. Composition is skewed to low complexity over residues 164–185 (NINS…SENI) and 197–231 (TTPS…TTTN). Composition is skewed to polar residues over residues 319–332 (NENI…STTK) and 340–351 (TASTTNTPIITA). A compositionally biased stretch (low complexity) spans 352 to 383 (QQNTTPLSPTQTTTTTTTPTTTTAQQNTPAQT). The segment covering 384–395 (ESKPPTTISINI) has biased composition (polar residues). Low complexity-rich tracts occupy residues 396–407 (KGSKSPKTTGGK) and 417–433 (VVIS…VATT). Polar residues predominate over residues 443–454 (STANNNSETTQT). Residues 479–506 (SDSATIQQLQQSISMLEDKIRLISSNNK) are a coiled coil. Disordered regions lie at residues 543–565 (FTKS…YSDD) and 580–730 (IPIP…RMGK). Composition is skewed to low complexity over residues 604–653 (NTST…PPQQ) and 660–686 (TQQE…DTTT). Positions 735 to 841 (VVLTPVFKRC…DVFEKGFPKV (107 aa)) constitute a Bromo domain. Residues 851-903 (KNVDQEKIEKLSNDLKNVTKELEKFKKDDSNSINNNNNNNNNYNNNNNNNNNN) are a coiled coil. Disordered stretches follow at residues 874-969 (KFKK…KVTT), 1039-1167 (HALP…NNNN), 1184-1452 (SIPE…TDSA), and 1480-1544 (EREE…KGNM). Composition is skewed to low complexity over residues 881-911 (NSIN…SSRS), 918-961 (SSGS…SSNN), and 1047-1061 (SSTH…DSSS). The NET domain maps to 957 to 1039 (SSSNNKKYPK…QYKNGEIPQH (83 aa)). Residues 1064 to 1077 (REIEKLQKQLDRLG) are compositionally biased toward basic and acidic residues. Residues 1092–1107 (HSKRISKPISKARGRK) show a composition bias toward basic residues. The span at 1112-1167 (SSSNLNNSSNNINNNNNNINNYNNNNNYNNNNNNNLNNNNNNNINSNLNNNLNNNN) shows a compositional bias: low complexity. Residues 1113 to 1150 (SSNLNNSSNNINNNNNNINNYNNNNNYNNNNNNNLNNN) are a coiled coil. A compositionally biased stretch (acidic residues) spans 1192–1204 (TDISESSDSESDS). Low complexity-rich tracts occupy residues 1205–1218 (ESGS…YSDS) and 1231–1334 (YNNS…SLTN). Positions 1280–1308 (NSNNNNSNNNNNNVNNNNNNHNNNNHNNN) form a coiled coil. Over residues 1356 to 1369 (SVASWSFDPTNNKE) the composition is skewed to polar residues. Residues 1370-1386 (SSSSSSTSSTSSTSNTT) show a composition bias toward low complexity. Residues 1387–1399 (LTPIIQQSSLTHA) show a composition bias toward polar residues. Low complexity-rich tracts occupy residues 1400–1424 (SSPI…NNLS) and 1432–1451 (NSPS…NTDS). The stretch at 1462–1544 (TLKQKEKERV…EKLNNSKGNM (83 aa)) forms a coiled coil. The span at 1480-1538 (EREEKEEELKKEEEKKRIEMEEIKRLAKEKEEREAEETRKQIESERAAAREAREKEKLN) shows a compositional bias: basic and acidic residues.

The chain is Bromodomain-containing protein DDB_G0270170 from Dictyostelium discoideum (Social amoeba).